Here is a 381-residue protein sequence, read N- to C-terminus: Beta-1,4-galactosyltransferase 5 (381 aa).

Residues 1–11 are Cytoplasmic-facing; it reads MPTHLRFRRRS. Residues 12 to 32 form a helical; Signal-anchor for type II membrane protein membrane-spanning segment; the sequence is FLGLLFLFSLSTSALYFIYSA. Residues 33 to 381 are Lumenal-facing; that stretch reads PGIVNEYLFM…SRDLAPVADY (349 aa). 3 N-linked (GlcNAc...) asparagine glycosylation sites follow: N73, N82, and N120. The cysteines at positions 106 and 151 are disulfide-linked. UDP-alpha-D-galactose contacts are provided by residues 162 to 166, 201 to 203, 228 to 229, Y257, and W289; these read PFRNR, FNR, and VD. The cysteines at positions 222 and 241 are disulfide-linked. Mn(2+) is bound at residue D229. 291 to 294 provides a ligand contact to N-acetyl-D-glucosamine; the sequence is GEDD. A Mn(2+)-binding site is contributed by H322. Residue 322–323 participates in UDP-alpha-D-galactose binding; the sequence is HH. An N-acetyl-D-glucosamine-binding site is contributed by R333. The N-linked (GlcNAc...) asparagine glycan is linked to N366.

It belongs to the glycosyltransferase 7 family. Requires Mn(2+) as cofactor.

The protein resides in the golgi apparatus. The protein localises to the golgi stack membrane. It catalyses the reaction a beta-D-glucosyl-(1&lt;-&gt;1')-N-acylsphing-4-enine + UDP-alpha-D-galactose = a beta-D-Gal-(1-&gt;4)-beta-D-Glc-(1&lt;-&gt;1)-Cer(d18:1(4E)) + UDP + H(+). It functions in the pathway protein modification; protein glycosylation. The protein operates within sphingolipid metabolism. In terms of biological role, catalyzes the synthesis of lactosylceramide (LacCer) via the transfer of galactose from UDP-galactose to glucosylceramide (GlcCer). Required for proper patterning of the dorsoventral axis during embryogenesis through the regulation of BMP signaling. Plays a role in proteoglycan glycosylation that is required for BMP-dependent specification of the dorsoventral axis. This is Beta-1,4-galactosyltransferase 5 (b4galt5) from Danio rerio (Zebrafish).